A 145-amino-acid polypeptide reads, in one-letter code: Large ribosomal subunit protein uL13 (145 aa).

This sequence belongs to the universal ribosomal protein uL13 family. As to quaternary structure, part of the 50S ribosomal subunit.

In terms of biological role, this protein is one of the early assembly proteins of the 50S ribosomal subunit, although it is not seen to bind rRNA by itself. It is important during the early stages of 50S assembly. The polypeptide is Large ribosomal subunit protein uL13 (Halobacterium salinarum (strain ATCC 700922 / JCM 11081 / NRC-1) (Halobacterium halobium)).